A 318-amino-acid polypeptide reads, in one-letter code: MIPEKKSIAIMKELSIGNTKQMLMINGVDVKNPLLLFLHGGPGTPQIGYVRHYQKELEQYFTVVHWDQRGSGLSYSKRISHHSMTINHFIKDTIQVTQWLLAHFSKSKLYLAGHSWGSILALHVLQQRPDLFYTYYGISQVVNPQDEESTAYQHIREISESKKASILSFLTRFIGAPPWKQDIQHLIYRFCVELTRGGFTHRHRQSLAVLFQMLTGNEYGVRNMHSFLNGLRFSKKHLTDELYRFNAFTSVPSIKVPCVFISGKHDLIVPAEISKQYYQELEAPEKRWFQFENSAHTPHIEEPSLFANTLSRHARHHL.

Serine 115 serves as the catalytic Nucleophile. Aspartate 266 is an active-site residue. Histidine 296 acts as the Proton donor in catalysis.

Belongs to the peptidase S33 family.

In terms of biological role, probable aminopeptidase. This chain is Probable aminopeptidase YbaC (ybaC), found in Bacillus subtilis (strain 168).